A 93-amino-acid chain; its full sequence is Small ribosomal subunit protein uS19 (93 aa).

The protein belongs to the universal ribosomal protein uS19 family.

Functionally, protein S19 forms a complex with S13 that binds strongly to the 16S ribosomal RNA. This chain is Small ribosomal subunit protein uS19, found in Desulfitobacterium hafniense (strain Y51).